A 173-amino-acid chain; its full sequence is Translation initiation factor IF-3 (173 aa).

It belongs to the IF-3 family. In terms of assembly, monomer.

It is found in the cytoplasm. Its function is as follows. IF-3 binds to the 30S ribosomal subunit and shifts the equilibrium between 70S ribosomes and their 50S and 30S subunits in favor of the free subunits, thus enhancing the availability of 30S subunits on which protein synthesis initiation begins. The chain is Translation initiation factor IF-3 from Methylobacterium radiotolerans (strain ATCC 27329 / DSM 1819 / JCM 2831 / NBRC 15690 / NCIMB 10815 / 0-1).